A 464-amino-acid chain; its full sequence is Trigger factor (464 aa).

The 82-residue stretch at 162 to 243 folds into the PPIase FKBP-type domain; the sequence is GDFVSIDLSA…VKSVKERELP (82 aa). The tract at residues 431 to 464 is disordered; the sequence is IDTSEFFGKRPSGDGAADEDADQADESTTADAGE. A compositionally biased stretch (acidic residues) spans 446-455; the sequence is AADEDADQAD.

Belongs to the FKBP-type PPIase family. Tig subfamily.

Its subcellular location is the cytoplasm. The catalysed reaction is [protein]-peptidylproline (omega=180) = [protein]-peptidylproline (omega=0). Its function is as follows. Involved in protein export. Acts as a chaperone by maintaining the newly synthesized protein in an open conformation. Functions as a peptidyl-prolyl cis-trans isomerase. This is Trigger factor from Mycobacterium avium (strain 104).